Consider the following 833-residue polypeptide: Leucine--tRNA ligase (833 aa).

The 'HIGH' region motif lies at P41–H52. Residues K610 to S614 carry the 'KMSKS' region motif. Position 613 (K613) interacts with ATP.

Belongs to the class-I aminoacyl-tRNA synthetase family.

The protein localises to the cytoplasm. The catalysed reaction is tRNA(Leu) + L-leucine + ATP = L-leucyl-tRNA(Leu) + AMP + diphosphate. In Streptococcus pyogenes serotype M2 (strain MGAS10270), this protein is Leucine--tRNA ligase.